A 435-amino-acid polypeptide reads, in one-letter code: Gap junction alpha-3 protein (435 aa).

Residues 2–15 (GDWSFLGRLLENAQ) lie within the membrane without spanning it. At 16-19 (EHST) the chain is on the cytoplasmic side. A helical membrane pass occupies residues 20 to 40 (VIGKVWLTVLFIFRILVLGAA). The Extracellular segment spans residues 41–71 (AEDVWGDEQSDFTCNTQQPGCENVCYDRAFP). 3 disulfides stabilise this stretch: cysteine 54/cysteine 192, cysteine 61/cysteine 186, and cysteine 65/cysteine 181. The helical transmembrane segment at 72 to 92 (ISHIRFWALQIIFVSTPTLIY) threads the bilayer. Residues 93–152 (LGHVLHIVRMEEKKKEREEEEQLKRESPSPKEPPQDNPSSRDDRGRVRMAGALLRTYVFN) are Cytoplasmic-facing. Over residues 108–121 (EREEEEQLKRESPS) the composition is skewed to basic and acidic residues. The interval 108 to 136 (EREEEEQLKRESPSPKEPPQDNPSSRDDR) is disordered. Residues 153 to 173 (IIFKTLFEVGFIAGQYFLYGF) traverse the membrane as a helical segment. At 174 to 201 (ELKPLYRCDRWPCPNTVDCFISRPTEKT) the chain is on the extracellular side. Residues 202 to 222 (IFIIFMLAVACASLLLNMLEI) form a helical membrane-spanning segment. At 223–435 (YHLGWKKLKQ…GRARPEDLAI (213 aa)) the chain is on the cytoplasmic side. The interval 332–435 (AAERQPPALK…GRARPEDLAI (104 aa)) is disordered. 2 stretches are compositionally biased toward low complexity: residues 342–389 (AYPA…ALAG) and 415–427 (GRAS…SSGR).

The protein belongs to the connexin family. Alpha-type (group II) subfamily. As to quaternary structure, a hemichannel or connexon is composed of a hexamer of connexins. A functional gap junction is formed by the apposition of two hemichannels. Forms heteromeric channels with GJA8.

Its subcellular location is the cell membrane. The protein localises to the cell junction. The protein resides in the gap junction. Structural component of lens fiber gap junctions. Gap junctions are dodecameric channels that connect the cytoplasm of adjoining cells. They are formed by the docking of two hexameric hemichannels, one from each cell membrane. Small molecules and ions diffuse from one cell to a neighboring cell via the central pore. This is Gap junction alpha-3 protein (GJA3) from Homo sapiens (Human).